The sequence spans 424 residues: Endochitinase 1 (424 aa).

Residues methionine 1 to alanine 22 form the signal peptide. The region spanning tyrosine 39–proline 402 is the GH18 domain. Asparagine 74, asparagine 78, and asparagine 96 each carry an N-linked (GlcNAc...) asparagine glycan. Chitin-binding positions include glycine 103–asparagine 104 and glycine 130–threonine 133. The active-site Proton donor is the glutamate 172. Residues tyrosine 173 and methionine 238 to aspartate 241 each bind chitin. N-linked (GlcNAc...) asparagine glycans are attached at residues asparagine 248 and asparagine 347. Tryptophan 379 lines the chitin pocket. The interval arginine 385 to proline 412 is disordered. A compositionally biased stretch (polar residues) spans isoleucine 392 to leucine 408.

The protein belongs to the glycosyl hydrolase 18 family. Chitinase class V subfamily.

It localises to the secreted. The catalysed reaction is Random endo-hydrolysis of N-acetyl-beta-D-glucosaminide (1-&gt;4)-beta-linkages in chitin and chitodextrins.. Functionally, secreted chitinase involved in the degradation of chitin, a component of the cell walls of fungi and exoskeletal elements of some animals (including worms and arthropods). Participates in the infection process and directly acts in the penetration process of the host cuticle. This is Endochitinase 1 (chit1) from Metarhizium robertsii (strain ARSEF 23 / ATCC MYA-3075) (Metarhizium anisopliae (strain ARSEF 23)).